A 421-amino-acid polypeptide reads, in one-letter code: Synaptotagmin-1 (421 aa).

The Vesicular segment spans residues 1 to 57 (MVSASRPEALAAPVTTVATLVPHNATEPASPGEGKEDAFSKLKQKFMNELHKIPLPP). N-linked (GlcNAc...) asparagine glycosylation occurs at N24. The chain crosses the membrane as a helical span at residues 58–79 (WALIAIAIVAVLLVVTCCFCVC). 5 S-palmitoyl cysteine lipidation sites follow: C74, C75, C77, C79, and C82. Over 80–421 (KKCLFKKKNK…EVDAMLAVKK (342 aa)) the chain is Cytoplasmic. The segment at 112-141 (TMKDQALKDDDAETGLTDGEEKEEPKEEEK) is disordered. Over residues 121-133 (DDAETGLTDGEEK) the composition is skewed to acidic residues. T128 is modified (phosphothreonine). The segment at 135–381 (EPKEEEKLGK…AIGKVFVGYN (247 aa)) is phospholipid binding. Residues 141–260 (KLGKLQYSLD…DFGHVTEEWR (120 aa)) enclose the C2 1 domain. Positions 171, 172, and 178 each coordinate Ca(2+). Residue Y229 is modified to Phosphotyrosine. Ca(2+) contacts are provided by D230, F231, D232, S235, K236, and D238. S264 carries the post-translational modification Phosphoserine. Residues 272 to 405 (KLGDICFSLR…NPRRPIAQWH (134 aa)) enclose the C2 2 domain. The Ca(2+) site is built by D303 and D309. 2 positions are modified to phosphoserine: S342 and S344. 3 residues coordinate Ca(2+): D363, D365, and D371.

The protein belongs to the synaptotagmin family. In terms of assembly, homotetramer. Heterodimer; heterodimerizes with SYT2 in presence of calcium. Interacts with SCAMP5. Interacts with STON2. Forms a complex with SV2B, syntaxin 1 and SNAP25. Interacts with SV2A, SV2B and SV2C. Interacts with RIMS1. Interacts with PRRT2. Interacts with DNAJC5 in a phosphorylation-dependent manner. Interacts (via N-terminus) with RAB3A. Interacts with SYT12. Interacts with calmodulin. Interacts with DNM1 (via C-terminal proline-rich domain (PRD)); this interaction facilitates vesicle fission during clathrin-mediated endocytosis (CME). It depends on Ca(2+) as a cofactor. Glycosylated. As to expression, expressed in the brain and adrenal medulla (at protein level).

Its subcellular location is the cytoplasmic vesicle. The protein resides in the secretory vesicle membrane. It is found in the secretory vesicle. It localises to the synaptic vesicle membrane. The protein localises to the chromaffin granule membrane. Its subcellular location is the cytoplasm. Calcium sensor that participates in triggering neurotransmitter release at the synapse. May have a regulatory role in the membrane interactions during trafficking of synaptic vesicles at the active zone of the synapse. It binds acidic phospholipids with a specificity that requires the presence of both an acidic head group and a diacyl backbone. A Ca(2+)-dependent interaction between synaptotagmin and putative receptors for activated protein kinase C has also been reported. It can bind to at least three additional proteins in a Ca(2+)-independent manner; these are neurexins, syntaxin and AP2. Plays a role in dendrite formation by melanocytes. This chain is Synaptotagmin-1, found in Mus musculus (Mouse).